The following is a 304-amino-acid chain: N-acetylmuramic acid 6-phosphate etherase (304 aa).

S2 carries the post-translational modification Phosphoserine. The SIS domain occupies 59 to 222; the sequence is AYESFQNGGR…STAVMVKIGK (164 aa). The Proton donor role is filled by E87. Residue E118 is part of the active site.

Belongs to the GCKR-like family. MurNAc-6-P etherase subfamily. In terms of assembly, homodimer.

It carries out the reaction N-acetyl-D-muramate 6-phosphate + H2O = N-acetyl-D-glucosamine 6-phosphate + (R)-lactate. It participates in amino-sugar metabolism; N-acetylmuramate degradation. Functionally, specifically catalyzes the cleavage of the D-lactyl ether substituent of MurNAc 6-phosphate, producing GlcNAc 6-phosphate and D-lactate. The protein is N-acetylmuramic acid 6-phosphate etherase of Bacillus subtilis (strain 168).